The sequence spans 429 residues: Probable proton-coupled zinc antiporter SLC30A4 (429 aa).

Residues 1–113 (MAGSGAWKRL…ILKQRKVKAR (113 aa)) lie on the Cytoplasmic side of the membrane. Residues 114–134 (LTIAAVLYLLFMIGELVGGYI) form a helical membrane-spanning segment. Residues 135–143 (ANSLAIMTD) are Lumenal-facing. The helical transmembrane segment at 144–164 (ALHMLTDLSAIILTLLALWLS) threads the bilayer. Zn(2+)-binding residues include histidine 146 and aspartate 150. The Cytoplasmic portion of the chain corresponds to 165–178 (SKSPTKRFTFGFHR). A helical transmembrane segment spans residues 179–199 (LEVLSAMISVLLVYILMGFLL). Residues 200–216 (YEAVQRTIHMNYEINGD) are Lumenal-facing. A helical transmembrane segment spans residues 217 to 237 (IMLITAAVGVAVNVIMGFLLN). Over 238-274 (QSGHRHSHSHSLPSNSPTRGSGCERNHGQDSLAVRAA) the chain is Cytoplasmic. The interval 240–264 (GHRHSHSHSLPSNSPTRGSGCERNH) is zinc binding. Residues 275–295 (FVHALGDLVQSVGVLIAAYII) traverse the membrane as a helical segment. Histidine 277 and aspartate 281 together coordinate Zn(2+). Residues 296-310 (RFKPEYKIADPICTY) lie on the Lumenal side of the membrane. Residues 311–331 (VFSLLVAFTTFRIIWDTVVII) form a helical membrane-spanning segment. The Cytoplasmic portion of the chain corresponds to 332–429 (LEGVPSHLNV…TCANCQSSSP (98 aa)).

It belongs to the cation diffusion facilitator (CDF) transporter (TC 2.A.4) family. SLC30A subfamily. As to quaternary structure, homodimer; dityrosine-linked. Homodimerization could be specific of the human protein and enhances the zinc transport efficiency. Interacts with TMEM163. Post-translationally, homodimerization through dityrosine bonds is stimulated by oxidative stress.

It localises to the endosome membrane. Its subcellular location is the late endosome membrane. The protein resides in the lysosome membrane. The enzyme catalyses Zn(2+)(in) + 2 H(+)(out) = Zn(2+)(out) + 2 H(+)(in). Probable proton-coupled zinc ion antiporter mediating zinc import from cytoplasm potentially into the endocytic compartment. Controls zinc deposition in milk. This Homo sapiens (Human) protein is Probable proton-coupled zinc antiporter SLC30A4.